Consider the following 158-residue polypeptide: Putative pre-16S rRNA nuclease (158 aa).

It belongs to the YqgF nuclease family.

The protein resides in the cytoplasm. Its function is as follows. Could be a nuclease involved in processing of the 5'-end of pre-16S rRNA. The protein is Putative pre-16S rRNA nuclease of Paracoccus denitrificans (strain Pd 1222).